A 169-amino-acid chain; its full sequence is Ribosome maturation factor RimM (169 aa).

Residues Asp94–Leu168 form the PRC barrel domain.

The protein belongs to the RimM family. Binds ribosomal protein uS19.

It is found in the cytoplasm. Its function is as follows. An accessory protein needed during the final step in the assembly of 30S ribosomal subunit, possibly for assembly of the head region. Essential for efficient processing of 16S rRNA. May be needed both before and after RbfA during the maturation of 16S rRNA. It has affinity for free ribosomal 30S subunits but not for 70S ribosomes. The protein is Ribosome maturation factor RimM of Cereibacter sphaeroides (strain ATCC 17029 / ATH 2.4.9) (Rhodobacter sphaeroides).